A 440-amino-acid polypeptide reads, in one-letter code: Histidinol dehydrogenase (440 aa).

Residues tyrosine 139, glutamine 201, and asparagine 224 each coordinate NAD(+). 3 residues coordinate substrate: serine 247, glutamine 269, and histidine 272. Zn(2+) is bound by residues glutamine 269 and histidine 272. Active-site proton acceptor residues include glutamate 337 and histidine 338. Substrate is bound by residues histidine 338, aspartate 371, glutamate 425, and histidine 430. Residue aspartate 371 participates in Zn(2+) binding. Histidine 430 is a Zn(2+) binding site.

Belongs to the histidinol dehydrogenase family. Zn(2+) serves as cofactor.

The catalysed reaction is L-histidinol + 2 NAD(+) + H2O = L-histidine + 2 NADH + 3 H(+). It functions in the pathway amino-acid biosynthesis; L-histidine biosynthesis; L-histidine from 5-phospho-alpha-D-ribose 1-diphosphate: step 9/9. Functionally, catalyzes the sequential NAD-dependent oxidations of L-histidinol to L-histidinaldehyde and then to L-histidine. This chain is Histidinol dehydrogenase, found in Prochlorococcus marinus (strain MIT 9312).